A 424-amino-acid polypeptide reads, in one-letter code: MHAPLTAEQRDVYDKYKFATYARSVALTRAQLDQWRDNKVIVPEPVSRAETLRVEAATRGQSKNALWNLLRLDRSTASRSSGGVALRSSALAFGNAQENRLKLANGELFERLGRLAAERAGCPVAETVLDCGMFISAFGLHSASPDAYFAMADGSCVPVEIKCPFNYRDTTVDQMRLELGKANRKYRVKHTALLVNKAGPAQFEVVKTHDHYRQMQRQMYVMRNAPVCFYVVRFKHNLVALAVPRDDDFCRKEAAAEGAAFVAFATENAGRVQFKRGDRRRASFAQNAADHGYNAAQVDALVRRGLYLSYGQLRCGHCDAFALDGPRAFELAMARPHEQCDGLALQEHEFDNVAFLDFTKRYTSLVDKRCDDARALRVDGFYVDDAGAVKTFCCGVHGSNASRRHLPTCSYYLAMGVNKIQNNM.

Belongs to the baculo-herpesviridae alkaline nuclease family. Interacts with LEF-3.

The protein resides in the host nucleus. Functionally, may play a role in maturation and encapsidation of viral replicated genome, by promoting DNA homologous recombination. Exhibits endonuclease and 5'-&gt;3' exonuclease activities. The endonuclease activity displays a specificity for ssDNA in vitro. The polypeptide is Alkaline nuclease (ALK-EXO) (Orgyia pseudotsugata (Douglas-fir tussock moth)).